The chain runs to 127 residues: Large ribosomal subunit protein bL21 (127 aa).

The segment at Thr102–Glu127 is disordered.

This sequence belongs to the bacterial ribosomal protein bL21 family. Part of the 50S ribosomal subunit. Contacts protein L20.

This protein binds to 23S rRNA in the presence of protein L20. The chain is Large ribosomal subunit protein bL21 from Bradyrhizobium sp. (strain BTAi1 / ATCC BAA-1182).